We begin with the raw amino-acid sequence, 303 residues long: N-acetyl-D-glucosamine kinase (303 aa).

Residues 4–11 and 133–140 contribute to the ATP site; these read GFDIGGTK and GVGGGLIF. Zn(2+)-binding residues include His-157, Cys-177, Cys-179, and Cys-184.

This sequence belongs to the ROK (NagC/XylR) family. NagK subfamily.

The enzyme catalyses N-acetyl-D-glucosamine + ATP = N-acetyl-D-glucosamine 6-phosphate + ADP + H(+). It functions in the pathway cell wall biogenesis; peptidoglycan recycling. Functionally, catalyzes the phosphorylation of N-acetyl-D-glucosamine (GlcNAc) derived from cell-wall degradation, yielding GlcNAc-6-P. The polypeptide is N-acetyl-D-glucosamine kinase (Escherichia coli (strain K12 / DH10B)).